The primary structure comprises 114 residues: uncharacterized protein (114 aa).

The next 3 helical transmembrane spans lie at 38–60 (PLWFLTVTGILEIAGALAMTAGI), 64–86 (YAAIGAGVLFVVLMAGAIHAHMF), and 91–113 (SVIMAIQAMICLIVSIMIIMGSY).

It is found in the cell membrane. This is an uncharacterized protein from Bacillus subtilis (strain 168).